The sequence spans 399 residues: Coenzyme A biosynthesis bifunctional protein CoaBC (399 aa).

The segment at 1–190 (MQSLAGKKIL…FAPKILVGKR (190 aa)) is phosphopantothenoylcysteine decarboxylase. The active-site Proton donor is the Cys-159. The segment at 191–399 (VLITAGPTRE…AVMHLIHEQM (209 aa)) is phosphopantothenate--cysteine ligase. CTP is bound by residues Asp-279, Lys-289, 307 to 310 (PDIV), Phe-326, Lys-340, and Lys-344.

In the N-terminal section; belongs to the HFCD (homo-oligomeric flavin containing Cys decarboxylase) superfamily. This sequence in the C-terminal section; belongs to the PPC synthetase family. Mg(2+) serves as cofactor. FMN is required as a cofactor.

It carries out the reaction N-[(R)-4-phosphopantothenoyl]-L-cysteine + H(+) = (R)-4'-phosphopantetheine + CO2. The catalysed reaction is (R)-4'-phosphopantothenate + L-cysteine + CTP = N-[(R)-4-phosphopantothenoyl]-L-cysteine + CMP + diphosphate + H(+). The protein operates within cofactor biosynthesis; coenzyme A biosynthesis; CoA from (R)-pantothenate: step 2/5. It participates in cofactor biosynthesis; coenzyme A biosynthesis; CoA from (R)-pantothenate: step 3/5. Functionally, catalyzes two sequential steps in the biosynthesis of coenzyme A. In the first step cysteine is conjugated to 4'-phosphopantothenate to form 4-phosphopantothenoylcysteine. In the second step the latter compound is decarboxylated to form 4'-phosphopantotheine. This Vibrio cholerae serotype O1 (strain ATCC 39315 / El Tor Inaba N16961) protein is Coenzyme A biosynthesis bifunctional protein CoaBC.